We begin with the raw amino-acid sequence, 447 residues long: Putative branched-chain amino acid carrier protein SAB1263c (447 aa).

12 helical membrane passes run 6–26, 40–60, 74–94, 114–134, 143–163, 193–213, 229–249, 290–310, 326–346, 350–370, 382–402, and 417–437; these read WVIGFTLFAMFFGAGNLIFPP, ILAFVLTGIDLPLLGVIVGAL, PKFSILFLIIIYLTIGPLFAI, SSIALFIFTIIYFIVVLYICL, IGSLLTPLLLITILAMIIKGY, GYLTMDAIAAIAFSMIVVNAV, LTAGLIAAVALIFIYISLGYI, LLGIIVALACLTTACGLIGAV, FVLVFILMSFIIANQGLNAVI, IPVLSIVYPVAITVVLLILIA, IPVIIVFILSIFSVISKLGWL, and LEWFPVAIIATILGYLVGIFV.

This sequence belongs to the branched chain amino acid transporter family.

The protein localises to the cell membrane. In terms of biological role, component of the transport system for branched-chain amino acids (leucine, isoleucine and valine), which is coupled to a proton motive force (Potential). Contributes to NaCl tolerance. The chain is Putative branched-chain amino acid carrier protein SAB1263c from Staphylococcus aureus (strain bovine RF122 / ET3-1).